The primary structure comprises 492 residues: Phytoene desaturase (lycopene-forming) (492 aa).

Residue Val5 to Gly38 coordinates FAD.

Belongs to the carotenoid/retinoid oxidoreductase family. FAD serves as cofactor.

It catalyses the reaction 15-cis-phytoene + 4 A = all-trans-lycopene + 4 AH2. The protein operates within carotenoid biosynthesis; lycopene biosynthesis. This enzyme converts phytoene into lycopene via the intermediaries of phytofluene, zeta-carotene and neurosporene by the introduction of four double bonds. The sequence is that of Phytoene desaturase (lycopene-forming) (crtI) from Pseudescherichia vulneris (Escherichia vulneris).